A 439-amino-acid polypeptide reads, in one-letter code: Ribosomal protein uS12 methylthiotransferase RimO (439 aa).

The region spanning 2–114 is the MTTase N-terminal domain; that stretch reads SKLYLMSLGC…IDEMILKKTN (113 aa). Residues cysteine 11, cysteine 45, cysteine 77, cysteine 146, cysteine 150, and cysteine 153 each coordinate [4Fe-4S] cluster. Residues 132 to 363 form the Radical SAM core domain; the sequence is TGSNSHAFIK…VDEVIEKSFE (232 aa).

Belongs to the methylthiotransferase family. RimO subfamily. [4Fe-4S] cluster is required as a cofactor.

The protein localises to the cytoplasm. It catalyses the reaction L-aspartate(89)-[ribosomal protein uS12]-hydrogen + (sulfur carrier)-SH + AH2 + 2 S-adenosyl-L-methionine = 3-methylsulfanyl-L-aspartate(89)-[ribosomal protein uS12]-hydrogen + (sulfur carrier)-H + 5'-deoxyadenosine + L-methionine + A + S-adenosyl-L-homocysteine + 2 H(+). Functionally, catalyzes the methylthiolation of an aspartic acid residue of ribosomal protein uS12. The polypeptide is Ribosomal protein uS12 methylthiotransferase RimO (Campylobacter jejuni subsp. jejuni serotype O:23/36 (strain 81-176)).